The primary structure comprises 170 residues: Lipoprotein signal peptidase (170 aa).

3 helical membrane passes run 12–32 (WYWV…WVLA), 67–87 (WQRW…TVWL), and 93–113 (GLWR…GNLI). Residues Asp-123 and Asp-141 contribute to the active site. Residues 133-153 (HFPAFNIADSAICVGAGLIIL) form a helical membrane-spanning segment.

The protein belongs to the peptidase A8 family.

It localises to the cell inner membrane. It catalyses the reaction Release of signal peptides from bacterial membrane prolipoproteins. Hydrolyzes -Xaa-Yaa-Zaa-|-(S,diacylglyceryl)Cys-, in which Xaa is hydrophobic (preferably Leu), and Yaa (Ala or Ser) and Zaa (Gly or Ala) have small, neutral side chains.. It participates in protein modification; lipoprotein biosynthesis (signal peptide cleavage). This protein specifically catalyzes the removal of signal peptides from prolipoproteins. The chain is Lipoprotein signal peptidase from Shewanella loihica (strain ATCC BAA-1088 / PV-4).